A 179-amino-acid chain; its full sequence is Peptidyl-tRNA hydrolase (179 aa).

Y15 provides a ligand contact to tRNA. H20 (proton acceptor) is an active-site residue. TRNA contacts are provided by Y66, N68, and N114.

It belongs to the PTH family. In terms of assembly, monomer.

It localises to the cytoplasm. It catalyses the reaction an N-acyl-L-alpha-aminoacyl-tRNA + H2O = an N-acyl-L-amino acid + a tRNA + H(+). Functionally, hydrolyzes ribosome-free peptidyl-tRNAs (with 1 or more amino acids incorporated), which drop off the ribosome during protein synthesis, or as a result of ribosome stalling. Its function is as follows. Catalyzes the release of premature peptidyl moieties from peptidyl-tRNA molecules trapped in stalled 50S ribosomal subunits, and thus maintains levels of free tRNAs and 50S ribosomes. This chain is Peptidyl-tRNA hydrolase, found in Chlamydia trachomatis serovar L2 (strain ATCC VR-902B / DSM 19102 / 434/Bu).